A 354-amino-acid chain; its full sequence is Rhodopsin (354 aa).

The Extracellular portion of the chain corresponds to 1–36 (MNGTEGPYFYVPMVNTTGIVRSPYEYPQYYLVSPAA). Residues Asn-2 and Asn-15 are each glycosylated (N-linked (GlcNAc...) asparagine). Residues 37–61 (YACLGAYMFFLILVGFPVNFLTLYV) form a helical membrane-spanning segment. Topologically, residues 62–73 (TIEHKKLRTPLN) are cytoplasmic. A helical membrane pass occupies residues 74–96 (YILLNLAVADLFMVFGGFTTTIY). The Extracellular segment spans residues 97–110 (TSMHGYFVLGRLGC). A disulfide bridge links Cys-110 with Cys-187. The helical transmembrane segment at 111–133 (NLEGYFATLGGEIGLWSLVVLAV) threads the bilayer. A 'Ionic lock' involved in activated form stabilization motif is present at residues 134–136 (ERW). Residues 134-152 (ERWLVVCKPISNFRFTENH) are Cytoplasmic-facing. The helical transmembrane segment at 153-173 (AIMGLVFTWIMANACAAPPLL) threads the bilayer. Residues 174–202 (GWSRYIPEGMQCSCGVDYYTRAEGFNNES) lie on the Extracellular side of the membrane. A helical membrane pass occupies residues 203–224 (FVIYMFICHFCIPLVVVFFCYG). At 225 to 252 (RLLCAVKEAAAAQQESETTQRAEREVTR) the chain is on the cytoplasmic side. The chain crosses the membrane as a helical span at residues 253–274 (MVVILVIGFLVCWTPYASVAWY). At 275-286 (IFSNQGSEFGPL) the chain is on the extracellular side. Residues 287–308 (FMTIPAFFAKSSSIYNPMIYIC) traverse the membrane as a helical segment. Lys-296 is modified (N6-(retinylidene)lysine). At 309 to 354 (MNKQFRHCMITTLCCGKNPFEEEEGASTTASKTEASSVSSSSVSPA) the chain is on the cytoplasmic side. 2 S-palmitoyl cysteine lipidation sites follow: Cys-322 and Cys-323. Residues 333–354 (GASTTASKTEASSVSSSSVSPA) are disordered. Low complexity predominate over residues 334–354 (ASTTASKTEASSVSSSSVSPA).

This sequence belongs to the G-protein coupled receptor 1 family. Opsin subfamily. Post-translationally, phosphorylated on some or all of the serine and threonine residues present in the C-terminal region. Contains one covalently linked retinal chromophore.

The protein localises to the membrane. The protein resides in the cell projection. Its subcellular location is the cilium. It localises to the photoreceptor outer segment. Photoreceptor required for image-forming vision at low light intensity. While most salt water fish species use retinal as chromophore, most freshwater fish use 3-dehydroretinal, or a mixture of retinal and 3-dehydroretinal. Light-induced isomerization of 11-cis to all-trans retinal triggers a conformational change that activates signaling via G-proteins. Subsequent receptor phosphorylation mediates displacement of the bound G-protein alpha subunit by arrestin and terminates signaling. This is Rhodopsin (rho) from Gambusia affinis (Western mosquitofish).